The sequence spans 170 residues: Peptide deformylase 1 (170 aa).

Residues Cys-91 and His-133 each contribute to the Fe cation site. The active site involves Glu-134. His-137 is a Fe cation binding site.

It belongs to the polypeptide deformylase family. The cofactor is Fe(2+).

It catalyses the reaction N-terminal N-formyl-L-methionyl-[peptide] + H2O = N-terminal L-methionyl-[peptide] + formate. In terms of biological role, removes the formyl group from the N-terminal Met of newly synthesized proteins. Requires at least a dipeptide for an efficient rate of reaction. N-terminal L-methionine is a prerequisite for activity but the enzyme has broad specificity at other positions. This is Peptide deformylase 1 from Vibrio vulnificus (strain CMCP6).